The sequence spans 381 residues: Putative F-box protein At4g17200 (381 aa).

The F-box domain maps to Met-1 to Ala-47.

This Arabidopsis thaliana (Mouse-ear cress) protein is Putative F-box protein At4g17200.